The chain runs to 866 residues: Leucine--tRNA ligase (866 aa).

Residues 42–52 carry the 'HIGH' region motif; that stretch reads PYPSGKLHMGH. The 'KMSKS' region motif lies at 630-634; that stretch reads KMSKS. Lys-633 serves as a coordination point for ATP.

The protein belongs to the class-I aminoacyl-tRNA synthetase family.

The protein resides in the cytoplasm. It catalyses the reaction tRNA(Leu) + L-leucine + ATP = L-leucyl-tRNA(Leu) + AMP + diphosphate. The sequence is that of Leucine--tRNA ligase from Laribacter hongkongensis (strain HLHK9).